The sequence spans 412 residues: Tyrosine--tRNA ligase 1 (412 aa).

Position 41 (tyrosine 41) interacts with L-tyrosine. The 'HIGH' region motif lies at 46-55 (ATADSLHVGH). 2 residues coordinate L-tyrosine: tyrosine 174 and glutamine 178. The short motif at 234 to 238 (KMGKS) is the 'KMSKS' region element. Lysine 237 is an ATP binding site. In terms of domain architecture, S4 RNA-binding spans 348–411 (LSLTDLLLEH…KKQHLHLRLE (64 aa)).

It belongs to the class-I aminoacyl-tRNA synthetase family. TyrS type 1 subfamily. As to quaternary structure, homodimer.

The protein resides in the cytoplasm. The catalysed reaction is tRNA(Tyr) + L-tyrosine + ATP = L-tyrosyl-tRNA(Tyr) + AMP + diphosphate + H(+). Its function is as follows. Catalyzes the attachment of tyrosine to tRNA(Tyr) in a two-step reaction: tyrosine is first activated by ATP to form Tyr-AMP and then transferred to the acceptor end of tRNA(Tyr). The sequence is that of Tyrosine--tRNA ligase 1 from Pseudomonas aeruginosa (strain ATCC 15692 / DSM 22644 / CIP 104116 / JCM 14847 / LMG 12228 / 1C / PRS 101 / PAO1).